The following is a 324-amino-acid chain: 4-hydroxy-2-oxoglutarate aldolase, mitochondrial (324 aa).

The N-terminal 22 residues, 1–22 (MFAHRSFSLLCRRSAVTSWRSQ), are a transit peptide targeting the mitochondrion. 74–75 (SN) serves as a coordination point for substrate. Lysine 193 serves as the catalytic Schiff-base intermediate with substrate. 2 residues coordinate substrate: serine 195 and glycine 219.

It belongs to the DapA family. In terms of assembly, homotetramer.

The protein resides in the mitochondrion. It catalyses the reaction (4S)-4-hydroxy-2-oxoglutarate = glyoxylate + pyruvate. It carries out the reaction (4R)-4-hydroxy-2-oxoglutarate = glyoxylate + pyruvate. Its activity is regulated as follows. Inhibited by divalent cations. Its function is as follows. Catalyzes the final step in the metabolic pathway of hydroxyproline. The chain is 4-hydroxy-2-oxoglutarate aldolase, mitochondrial from Danio rerio (Zebrafish).